The following is a 287-amino-acid chain: Glutamate racemase (287 aa).

Substrate contacts are provided by residues 32 to 33 (DS) and 64 to 65 (YG). Catalysis depends on Cys96, which acts as the Proton donor/acceptor. Substrate is bound at residue 97–98 (NT). Cys208 (proton donor/acceptor) is an active-site residue. 209–210 (TH) contributes to the substrate binding site.

The protein belongs to the aspartate/glutamate racemases family.

It catalyses the reaction L-glutamate = D-glutamate. It participates in cell wall biogenesis; peptidoglycan biosynthesis. Functionally, provides the (R)-glutamate required for cell wall biosynthesis. The polypeptide is Glutamate racemase (Photorhabdus laumondii subsp. laumondii (strain DSM 15139 / CIP 105565 / TT01) (Photorhabdus luminescens subsp. laumondii)).